Consider the following 507-residue polypeptide: CWF19-like protein DRN1 (507 aa).

Position 242 is a phosphoserine (Ser242).

It belongs to the CWF19 family. In terms of assembly, interacts with DBR1. Interacts with SYF1, a component of the NTC complex. Interacts with lariat-introns and lariat-intermediates.

It localises to the nucleus. The protein localises to the cytoplasm. Functionally, involved in branched RNA metabolism, modulating the turnover of lariat-intron pre-mRNAs by the lariat-debranching enzyme DBR1. Enhances the debranching activity of DBR1 in vitro. This chain is CWF19-like protein DRN1 (DRN1), found in Saccharomyces cerevisiae (strain ATCC 204508 / S288c) (Baker's yeast).